The sequence spans 248 residues: MGIKVGVLGAKGRVGQTIVAAVNESDDLELVAEIGVDDDLSLLVDNGAEVVVDFTTPNAVMGNLEFCINNGISAVVGTTGFDDARLEQVRAWLEGKDNVGVLIAPNFAISAVLTMVFSKQAARFFESAEVIELHHPNKLDAPSGTAIHTAQGIAAARKEAGMDAQPDATEQALEGSRGASVDGIPVHAVRMSGMVAHEQVIFGTQGQTLTIKQDSYDRNSFAPGVLVGVRNIAQHPGLVVGLEHYLGL.

Residues 9–14 (GAKGRV), 77–79 (GTT), and 104–107 (APNF) contribute to the NAD(+) site. H134 acts as the Proton donor/acceptor in catalysis. H135 contributes to the (S)-2,3,4,5-tetrahydrodipicolinate binding site. K138 acts as the Proton donor in catalysis. 144 to 145 (GT) is a (S)-2,3,4,5-tetrahydrodipicolinate binding site.

Belongs to the DapB family.

It localises to the cytoplasm. It catalyses the reaction (S)-2,3,4,5-tetrahydrodipicolinate + NAD(+) + H2O = (2S,4S)-4-hydroxy-2,3,4,5-tetrahydrodipicolinate + NADH + H(+). The catalysed reaction is (S)-2,3,4,5-tetrahydrodipicolinate + NADP(+) + H2O = (2S,4S)-4-hydroxy-2,3,4,5-tetrahydrodipicolinate + NADPH + H(+). The protein operates within amino-acid biosynthesis; L-lysine biosynthesis via DAP pathway; (S)-tetrahydrodipicolinate from L-aspartate: step 4/4. In terms of biological role, catalyzes the conversion of 4-hydroxy-tetrahydrodipicolinate (HTPA) to tetrahydrodipicolinate. This is 4-hydroxy-tetrahydrodipicolinate reductase from Corynebacterium glutamicum (strain R).